Consider the following 217-residue polypeptide: Peroxiredoxin (217 aa).

One can recognise a Thioredoxin domain in the interval 2-159 (PVIGEKFPEV…IVRLVKALQV (158 aa)). The Cysteine sulfenic acid (-SOH) intermediate role is filled by cysteine 46. Arginine 122 serves as a coordination point for substrate. Cysteines 206 and 212 form a disulfide.

The protein belongs to the peroxiredoxin family. Prx6 subfamily. As to quaternary structure, homodecamer. Pentamer of dimers that assemble into a ring structure.

Its subcellular location is the cytoplasm. The catalysed reaction is a hydroperoxide + [thioredoxin]-dithiol = an alcohol + [thioredoxin]-disulfide + H2O. Thiol-specific peroxidase that catalyzes the reduction of hydrogen peroxide and organic hydroperoxides to water and alcohols, respectively. Plays a role in cell protection against oxidative stress by detoxifying peroxides. This is Peroxiredoxin from Methanocaldococcus jannaschii (strain ATCC 43067 / DSM 2661 / JAL-1 / JCM 10045 / NBRC 100440) (Methanococcus jannaschii).